The sequence spans 573 residues: Poly(ribitol-phosphate) beta-N-acetylglucosaminyltransferase TarS (573 aa).

UDP-N-acetyl-alpha-D-glucosamine contacts are provided by residues Pro9, Asp41, Asn68, Arg76, 92-94 (DSD), Arg127, and Glu178. Asp94 lines the Mn(2+) pocket. Asp179 acts as the Proton acceptor in catalysis. UDP-N-acetyl-alpha-D-glucosamine contacts are provided by residues Arg207 and 211-213 (HMS).

Belongs to the glycosyltransferase 2 family. In terms of assembly, homotrimer. Requires Mn(2+) as cofactor.

The enzyme catalyses 4-O-[(D-ribitylphospho)(n)-di{(2R)-glycerylphospho}]-N-acetyl-beta-D-mannosaminyl-(1-&gt;4)-N-acetyl-alpha-D-glucosaminyl di-trans,octa-cis-undecaprenyl diphosphate + n UDP-N-acetyl-alpha-D-glucosamine = 4-O-([2-N-acetyl-beta-D-glucosaminyl-1-D-ribitylphospho](n)-di{[2R]-1-glycerylphospho})-N-acetyl-beta-D-mannosaminyl-(1-&gt;4)-N-acetyl-alpha-D-glucosaminyl di-trans,octa-cis-undecaprenyl diphosphate + n UDP + n H(+). It functions in the pathway cell wall biogenesis; poly(ribitol phosphate) teichoic acid biosynthesis. Functionally, attaches beta-O-GlcNAc (beta-O-N-acetyl-D-glucosamine) residues to the C4 position of poly(RboP)-wall teichoic acids (WTAs). Prefers UDP-GlcNAc as a donor substrate and is specific for poly(ribitol phosphate) WTAs. Can also use UDP-Glc and UDP-GalNAc, but not UDP-galactose or UDP-glucuronic acid. Mediates beta-lactam resistance in methicillin resistant Staphylococcus aureus (MRSA) strains. The polypeptide is Poly(ribitol-phosphate) beta-N-acetylglucosaminyltransferase TarS (Staphylococcus aureus (strain MW2)).